Here is a 133-residue protein sequence, read N- to C-terminus: Secretin (133 aa).

Residues 1–22 (MEPPLPTPMLLLLLLLLSSSAA) form the signal peptide. Residues 23–30 (LPAPPRTP) constitute a propeptide that is removed on maturation. V58 bears the Valine amide mark. A Phosphoserine modification is found at S62. Positions 62–133 (SEQDTENIPE…EWTETTRPPR (72 aa)) are excised as a propeptide.

This sequence belongs to the glucagon family. As to expression, highly expressed in the intestine. Also expressed in the hippocampus, cerebellum and the brain stem in adult mouse brain. In the hippocampus, expressed in the dentate gyrus, the hilus and the molecular layer.

The protein resides in the secreted. Hormone involved in different processes, such as regulation of the pH of the duodenal content, food intake and water homeostasis. Exerts its biological effects by binding to secretin receptor (SCTR), a G-protein coupled receptor expressed in the basolateral domain of several cells. Acts as a key gastrointestinal hormone by regulating the pH of the duodenal content. Secreted by S cells of the duodenum in the crypts of Lieberkuehn and regulates the pH of the duodenum by (1) inhibiting the secretion of gastric acid from the parietal cells of the stomach and (2) stimulating the production of bicarbonate (NaHCO(3)) from the ductal cells of the pancreas. Production of bicarbonate is essential to neutralize the pH and ensure no damage is done to the small intestine by the gastric acid. In addition to regulating the pH of the duodenal content, plays a central role in diet induced thermogenesis: acts as a non-sympathetic brown fat (BAT) activator mediating prandial thermogenesis, which consequentially induces satiation. Mechanistically, secretin released by the gut after a meal binds to secretin receptor (SCTR) in brown adipocytes, activating brown fat thermogenesis by stimulating lipolysis, which is sensed in the brain and promotes satiation. Also able to stimulate lipolysis in white adipocytes. Also plays an important role in cellular osmoregulation: released into the systemic circulation in response to hyperosmolality and acts at different levels in the hypothalamus, pituitary and kidney to regulate water homeostasis. Also plays a role in the central nervous system, possibly by acting as a neuropeptide hormone: required for hippocampal synaptic function and neural progenitor cells maintenance. This chain is Secretin, found in Mus musculus (Mouse).